A 758-amino-acid chain; its full sequence is POU domain, class 2, transcription factor 1 (758 aa).

Polar residues-rich tracts occupy residues 1–10 (MKLHSSSKIQ), 19–30 (RMNNPSETSKSP), and 275–285 (VQQLPQSQTTP). Disordered stretches follow at residues 1 to 43 (MKLH…QTNG), 271 to 296 (AATP…LEEP), 377 to 398 (TNQS…RRKK), 450 to 472 (EKRI…LFSS), and 534 to 573 (SVLT…MTSS). Residues 294-368 (EEPSDLEELE…LLEKWLNDAE (75 aa)) enclose the POU-specific domain. Positions 395–454 (RRKKRTSIETNIRVALEKSFLENQKPTSEEITMIADQLNMEKEVIRVWFCNRRQKEKRIN) form a DNA-binding region, homeobox. Over residues 455 to 472 (PPSSGGSSSSPIKSLFSS) the composition is skewed to low complexity.

This sequence belongs to the POU transcription factor family. Class-2 subfamily. Expressed in oocytes (at protein level). Expressed in the tadpole brain (at protein level).

It is found in the cytoplasm. The protein resides in the nucleus. In terms of biological role, transcription factor that binds to the octamer motif (5'-ATTTGCAT-3') and activates the promoters of the genes of some small nuclear RNAs (snRNA) and histone H2B. In vitro does not bind to variant octamer sequences, such as the H2B octamer 5'-GTTTGCAT-3', although binding has been observed in vivo during early embryogenesis, suggesting that interactions between pou2f1 and other factors might be required for octamer-dependent H2B transcription. Acts downstream of Notch signaling during radial glia formation. May be important for gastrulation, possibly through the regulation of an FGF-type signaling pathway. The sequence is that of POU domain, class 2, transcription factor 1 (pou2f1) from Xenopus laevis (African clawed frog).